Here is a 395-residue protein sequence, read N- to C-terminus: Sensor protein DltS (395 aa).

2 helical membrane-spanning segments follow: residues 9–29 (FVFL…AVSN) and 136–156 (FLIL…SLYL). The region spanning 177-387 (DASHELKTPI…RLEVQLPIDG (211 aa)) is the Histidine kinase domain. H180 is subject to Phosphohistidine; by autocatalysis.

It is found in the cell membrane. It catalyses the reaction ATP + protein L-histidine = ADP + protein N-phospho-L-histidine.. Member of the two-component regulatory system DltS/DltR. Regulates the expression of the dlt operon. Probably phosphorylates DltR. In Streptococcus agalactiae serotype V (strain ATCC BAA-611 / 2603 V/R), this protein is Sensor protein DltS (dltS).